Reading from the N-terminus, the 181-residue chain is Probable cobalt-precorrin-6B C(15)-methyltransferase (decarboxylating) (181 aa).

Residues threonine 16, glycine 40–glycine 44, aspartate 61, and alanine 89 contribute to the S-adenosyl-L-methionine site.

Belongs to the methyltransferase superfamily. Archaeal-type CbiT family.

The enzyme catalyses Co-precorrin-6B + S-adenosyl-L-methionine = Co-precorrin-7 + S-adenosyl-L-homocysteine + CO2. Its pathway is cofactor biosynthesis; adenosylcobalamin biosynthesis; cob(II)yrinate a,c-diamide from sirohydrochlorin (anaerobic route): step 8/10. Catalyzes the methylation of C-15 in cobalt-precorrin-6B followed by the decarboxylation of C-12 to form cobalt-precorrin-7. The sequence is that of Probable cobalt-precorrin-6B C(15)-methyltransferase (decarboxylating) from Methanococcus maripaludis (strain DSM 14266 / JCM 13030 / NBRC 101832 / S2 / LL).